A 508-amino-acid chain; its full sequence is Photosystem II CP47 reaction center protein (508 aa).

Transmembrane regions (helical) follow at residues alanine 21–serine 36, isoleucine 101–tryptophan 115, glycine 140–phenylalanine 156, isoleucine 203–serine 218, valine 237–valine 252, and cysteine 457–arginine 472.

Belongs to the PsbB/PsbC family. PsbB subfamily. PSII is composed of 1 copy each of membrane proteins PsbA, PsbB, PsbC, PsbD, PsbE, PsbF, PsbH, PsbI, PsbJ, PsbK, PsbL, PsbM, PsbT, PsbX, PsbY, PsbZ, Psb30/Ycf12, at least 3 peripheral proteins of the oxygen-evolving complex and a large number of cofactors. It forms dimeric complexes. It depends on Binds multiple chlorophylls. PSII binds additional chlorophylls, carotenoids and specific lipids. as a cofactor.

Its subcellular location is the plastid. The protein resides in the chloroplast thylakoid membrane. In terms of biological role, one of the components of the core complex of photosystem II (PSII). It binds chlorophyll and helps catalyze the primary light-induced photochemical processes of PSII. PSII is a light-driven water:plastoquinone oxidoreductase, using light energy to abstract electrons from H(2)O, generating O(2) and a proton gradient subsequently used for ATP formation. The polypeptide is Photosystem II CP47 reaction center protein (Zygnema circumcarinatum (Green alga)).